Reading from the N-terminus, the 155-residue chain is UPF0225 protein PC1_1977 (155 aa).

The protein belongs to the UPF0225 family.

This Pectobacterium carotovorum subsp. carotovorum (strain PC1) protein is UPF0225 protein PC1_1977.